The sequence spans 349 residues: uncharacterized protein (349 aa).

The THUMP domain occupies 51–160 (NIIKENKNNL…QDESYISIFQ (110 aa)).

This is an uncharacterized protein from Methanocaldococcus jannaschii (strain ATCC 43067 / DSM 2661 / JAL-1 / JCM 10045 / NBRC 100440) (Methanococcus jannaschii).